The sequence spans 466 residues: UDP-N-acetylmuramoylalanine--D-glutamate ligase (466 aa).

Residue 121–127 (GTNGKST) coordinates ATP.

This sequence belongs to the MurCDEF family.

Its subcellular location is the cytoplasm. The catalysed reaction is UDP-N-acetyl-alpha-D-muramoyl-L-alanine + D-glutamate + ATP = UDP-N-acetyl-alpha-D-muramoyl-L-alanyl-D-glutamate + ADP + phosphate + H(+). It participates in cell wall biogenesis; peptidoglycan biosynthesis. Cell wall formation. Catalyzes the addition of glutamate to the nucleotide precursor UDP-N-acetylmuramoyl-L-alanine (UMA). The polypeptide is UDP-N-acetylmuramoylalanine--D-glutamate ligase (Nitrobacter winogradskyi (strain ATCC 25391 / DSM 10237 / CIP 104748 / NCIMB 11846 / Nb-255)).